The primary structure comprises 397 residues: Elongation factor Tu 1 (397 aa).

The 197-residue stretch at 10–206 (KPHVNIGTIG…AIDTWIPEPV (197 aa)) folds into the tr-type G domain. The G1 stretch occupies residues 19–26 (GHVDHGKT). GTP is bound at residue 19–26 (GHVDHGKT). Thr-26 is a binding site for Mg(2+). The segment at 61 to 65 (GITIS) is G2. Residues 82 to 85 (DCPG) form a G3 region. Residues 82-86 (DCPGH) and 137-140 (NKCD) each bind GTP. A G4 region spans residues 137–140 (NKCD). The G5 stretch occupies residues 175–177 (SAL).

Belongs to the TRAFAC class translation factor GTPase superfamily. Classic translation factor GTPase family. EF-Tu/EF-1A subfamily. Monomer.

The protein localises to the cytoplasm. It catalyses the reaction GTP + H2O = GDP + phosphate + H(+). In terms of biological role, GTP hydrolase that promotes the GTP-dependent binding of aminoacyl-tRNA to the A-site of ribosomes during protein biosynthesis. This chain is Elongation factor Tu 1, found in Alkaliphilus metalliredigens (strain QYMF).